Here is a 173-residue protein sequence, read N- to C-terminus: Large ribosomal subunit protein uL16 (173 aa).

Belongs to the universal ribosomal protein uL16 family.

The chain is Large ribosomal subunit protein uL16 from Methanosarcina mazei (strain ATCC BAA-159 / DSM 3647 / Goe1 / Go1 / JCM 11833 / OCM 88) (Methanosarcina frisia).